The chain runs to 491 residues: MDGVSTAILLLLLAVISLSLTFTSWGKGQLPPGPKPLPILGNLLQLRSQDLLTSLTKLSKDYGSVFTVYLGPRRVIVLSGYQTVKEALVDKGEEFSGRGSYPIFFNFTKGNGIAFSDGERWKILRRFSVQILRNFGMGKRSIEERILEEGSFLLDVLRKTEGKPFDPVFILSRSVSNIICSVIFGSRFDYDDERLLTIIHFINDNFQIMSSPWGEMYNIFPSLLDWVPGPHRRVFRNFGGMKDLIARSVREHQDSLDPNSPRDFIDCFLTKMVQEKQDPLSHFNMDTLLMTTHNLLFGGTETVGTTLRHAFLILMKYPKVQARVQEEIDCVVGRSRMPTLEDRASMPYTDAVIHEVQRFADVIPMNLPHRVIRDTPFRGFLIPKGTDVITLLNTVHYDSDQFKTPQEFNPEHFLDANQSFKKSPAFMPFSAGRRLCLGEPLARMELFIYLTSILQNFTLHPLVEPEDIDLTPLSSGLGNLPRPFQLCMRIR.

A heme-binding site is contributed by Cys436.

This sequence belongs to the cytochrome P450 family. Heme is required as a cofactor.

The protein resides in the endoplasmic reticulum membrane. It localises to the microsome membrane. Involved in the regio- and stereoselective transformation of naphthalene to trans-1R-hydroxy-2R-glutathionyl-1,2-dihydronaphthalene in the presence of glutathione and glutathione S-transferases. It specifically catalyzes the production of a very reactive and potentially toxic intermediate, the 2R,2S arene oxide, that is associated with necrosis of the unciliated bronchiolar epithelial cells or club cells in lung. The protein is Cytochrome P450 2F2 (Cyp2f2) of Rattus norvegicus (Rat).